Reading from the N-terminus, the 313-residue chain is Porphobilinogen deaminase (313 aa).

Position 240 is an S-(dipyrrolylmethanemethyl)cysteine (Cys240).

The protein belongs to the HMBS family. Monomer. The cofactor is dipyrromethane.

The catalysed reaction is 4 porphobilinogen + H2O = hydroxymethylbilane + 4 NH4(+). It participates in porphyrin-containing compound metabolism; protoporphyrin-IX biosynthesis; coproporphyrinogen-III from 5-aminolevulinate: step 2/4. In terms of biological role, tetrapolymerization of the monopyrrole PBG into the hydroxymethylbilane pre-uroporphyrinogen in several discrete steps. The protein is Porphobilinogen deaminase of Moorella thermoacetica (strain ATCC 39073 / JCM 9320).